A 371-amino-acid chain; its full sequence is Poly(rC)-binding protein 3 (371 aa).

3 KH domains span residues 45–95 (TLTI…TITG), 129–182 (PVTL…TISG), and 293–357 (ASTH…QYLI).

Widely expressed, with highest levels in testis and fat tissues and lowest in heart.

It localises to the cytoplasm. Its function is as follows. Single-stranded nucleic acid binding protein that binds preferentially to oligo dC. This is Poly(rC)-binding protein 3 (Pcbp3) from Mus musculus (Mouse).